Reading from the N-terminus, the 336-residue chain is 3-isopropylmalate dehydrogenase (336 aa).

Substrate contacts are provided by Arg-87, Arg-97, Arg-121, and Asp-211. Residues Asp-211, Asp-235, and Asp-239 each coordinate Mg(2+). An NAD(+)-binding site is contributed by 271–283 (GSAPDIAGQGIAD).

This sequence belongs to the isocitrate and isopropylmalate dehydrogenases family. LeuB type 2 subfamily. In terms of assembly, homodimer. It depends on Mg(2+) as a cofactor. Mn(2+) is required as a cofactor.

Its subcellular location is the cytoplasm. It catalyses the reaction (2R,3S)-3-isopropylmalate + NAD(+) = 4-methyl-2-oxopentanoate + CO2 + NADH. It participates in amino-acid biosynthesis; L-leucine biosynthesis; L-leucine from 3-methyl-2-oxobutanoate: step 3/4. Catalyzes the oxidation of 3-carboxy-2-hydroxy-4-methylpentanoate (3-isopropylmalate) to 3-carboxy-4-methyl-2-oxopentanoate. The product decarboxylates to 4-methyl-2 oxopentanoate. This is 3-isopropylmalate dehydrogenase from Mycolicibacterium paratuberculosis (strain ATCC BAA-968 / K-10) (Mycobacterium paratuberculosis).